Here is a 1030-residue protein sequence, read N- to C-terminus: Arrestin domain-containing protein F (1030 aa).

Disordered regions lie at residues 1-27 (MEIIKENNENDGENINNIPKKKSGSKR) and 119-154 (ENKNISDNSNFDDGEEDDTDNKKNINNKNNNNNNPL). Residues 128–137 (NFDDGEEDDT) are compositionally biased toward acidic residues. Low complexity predominate over residues 142 to 152 (NINNKNNNNNN). 2 coiled-coil regions span residues 320–374 (HQLE…HNNN) and 544–577 (QKLNKKDKEKEKEKEKENDNDNENNNSESLIRDQ). 2 disordered regions span residues 539–572 (SPQSPQKLNKKDKEKEKEKEKENDNDNENNNSES) and 885–931 (NNEK…NNNN). A compositionally biased stretch (basic and acidic residues) spans 547–562 (NKKDKEKEKEKEKEND). A compositionally biased stretch (low complexity) spans 910–931 (SPSSSSFLSNSSNTSSSKNNNN).

The protein belongs to the arrestin family.

The chain is Arrestin domain-containing protein F (adcF) from Dictyostelium discoideum (Social amoeba).